The primary structure comprises 532 residues: Metal-staphylopine-binding protein CntA (532 aa).

Residues 1–20 (MRKLTKMSAMLLASGLILTG) form the signal peptide. The N-palmitoyl cysteine moiety is linked to residue Cys21. Cys21 carries the S-diacylglycerol cysteine lipid modification. Staphylopine-binding residues include Arg165, Arg418, and Asn448.

Belongs to the bacterial solute-binding protein 5 family. As to quaternary structure, the complex is composed of two ATP-binding proteins (CntD and CntF), two transmembrane proteins (CntB and CntC) and a solute-binding protein (CntA).

The protein resides in the cell membrane. Nickel/cobalt import is reduced in the presence of zinc. Its function is as follows. Part of the ABC transporter complex CntABCDF (Opp1) involved in the uptake of metal in complex with the metallophore staphylopine (StP). Involved in the import of divalent metals ions such as nickel, cobalt and zinc. Binds the metal via the metallophore StP, and transfers the StP-metal complex to the membrane-bound permease. Binds one molecule of StP/metal. Binds StP/Co(2+) and StP/Ni(2+) tighter than StP/Zn(2+). Plays a major role in nickel/cobalt import in zinc-depleted conditions. Contributes to virulence. Required for full urease activity in vitro. This chain is Metal-staphylopine-binding protein CntA, found in Staphylococcus aureus (strain NCTC 8325 / PS 47).